The following is a 486-amino-acid chain: Ribulose bisphosphate carboxylase large chain (486 aa).

Positions 125 and 175 each coordinate substrate. K177 acts as the Proton acceptor in catalysis. K179 contributes to the substrate binding site. Mg(2+) is bound by residues K203, D205, and E206. N6-carboxylysine is present on K203. H295 functions as the Proton acceptor in the catalytic mechanism. Substrate-binding residues include R296, H328, and S380.

It belongs to the RuBisCO large chain family. Type I subfamily. As to quaternary structure, heterohexadecamer of 8 large chains and 8 small chains. Requires Mg(2+) as cofactor.

It catalyses the reaction 2 (2R)-3-phosphoglycerate + 2 H(+) = D-ribulose 1,5-bisphosphate + CO2 + H2O. It carries out the reaction D-ribulose 1,5-bisphosphate + O2 = 2-phosphoglycolate + (2R)-3-phosphoglycerate + 2 H(+). Functionally, ruBisCO catalyzes two reactions: the carboxylation of D-ribulose 1,5-bisphosphate, the primary event in carbon dioxide fixation, as well as the oxidative fragmentation of the pentose substrate. Both reactions occur simultaneously and in competition at the same active site. The chain is Ribulose bisphosphate carboxylase large chain from Cereibacter sphaeroides (Rhodobacter sphaeroides).